Here is a 412-residue protein sequence, read N- to C-terminus: Multifunctional CCA protein (412 aa).

ATP is bound by residues Gly8 and Arg11. CTP is bound by residues Gly8 and Arg11. Residues Asp21 and Asp23 each coordinate Mg(2+). Residues Arg91, Arg137, and Arg140 each coordinate ATP. Residues Arg91, Arg137, and Arg140 each contribute to the CTP site. The HD domain occupies 228–329 (TGIHTLMTLS…VKLFDSIDAW (102 aa)).

It belongs to the tRNA nucleotidyltransferase/poly(A) polymerase family. Bacterial CCA-adding enzyme type 1 subfamily. Monomer. Can also form homodimers and oligomers. The cofactor is Mg(2+). It depends on Ni(2+) as a cofactor.

It catalyses the reaction a tRNA precursor + 2 CTP + ATP = a tRNA with a 3' CCA end + 3 diphosphate. The catalysed reaction is a tRNA with a 3' CCA end + 2 CTP + ATP = a tRNA with a 3' CCACCA end + 3 diphosphate. Functionally, catalyzes the addition and repair of the essential 3'-terminal CCA sequence in tRNAs without using a nucleic acid template. Adds these three nucleotides in the order of C, C, and A to the tRNA nucleotide-73, using CTP and ATP as substrates and producing inorganic pyrophosphate. tRNA 3'-terminal CCA addition is required both for tRNA processing and repair. Also involved in tRNA surveillance by mediating tandem CCA addition to generate a CCACCA at the 3' terminus of unstable tRNAs. While stable tRNAs receive only 3'-terminal CCA, unstable tRNAs are marked with CCACCA and rapidly degraded. This Escherichia coli O6:H1 (strain CFT073 / ATCC 700928 / UPEC) protein is Multifunctional CCA protein.